Consider the following 362-residue polypeptide: Holliday junction branch migration complex subunit RuvB (362 aa).

Residues 1–20 are disordered; sequence MKRTIMTNTDTFEQPNTGAN. Positions 15–203 are large ATPase domain (RuvB-L); it reads PNTGANEESL…FGFTAHLDFY (189 aa). Residues Leu-42, Arg-43, Gly-84, Lys-87, Thr-88, Thr-89, 150–152, Arg-193, Tyr-203, and Arg-240 each bind ATP; that span reads EDF. Thr-88 is a Mg(2+) binding site. Residues 204-274 are small ATPAse domain (RuvB-S); the sequence is PHEELEKLIE…DVKEALALYQ (71 aa). The tract at residues 277 to 362 is head domain (RuvB-H); the sequence is TEGLDRLDIA…ESAYDVNEMS (86 aa). DNA contacts are provided by Arg-332 and Arg-337.

It belongs to the RuvB family. Homohexamer. Forms an RuvA(8)-RuvB(12)-Holliday junction (HJ) complex. HJ DNA is sandwiched between 2 RuvA tetramers; dsDNA enters through RuvA and exits via RuvB. An RuvB hexamer assembles on each DNA strand where it exits the tetramer. Each RuvB hexamer is contacted by two RuvA subunits (via domain III) on 2 adjacent RuvB subunits; this complex drives branch migration. In the full resolvosome a probable DNA-RuvA(4)-RuvB(12)-RuvC(2) complex forms which resolves the HJ.

Its subcellular location is the cytoplasm. The enzyme catalyses ATP + H2O = ADP + phosphate + H(+). Its function is as follows. The RuvA-RuvB-RuvC complex processes Holliday junction (HJ) DNA during genetic recombination and DNA repair, while the RuvA-RuvB complex plays an important role in the rescue of blocked DNA replication forks via replication fork reversal (RFR). RuvA specifically binds to HJ cruciform DNA, conferring on it an open structure. The RuvB hexamer acts as an ATP-dependent pump, pulling dsDNA into and through the RuvAB complex. RuvB forms 2 homohexamers on either side of HJ DNA bound by 1 or 2 RuvA tetramers; 4 subunits per hexamer contact DNA at a time. Coordinated motions by a converter formed by DNA-disengaged RuvB subunits stimulates ATP hydrolysis and nucleotide exchange. Immobilization of the converter enables RuvB to convert the ATP-contained energy into a lever motion, pulling 2 nucleotides of DNA out of the RuvA tetramer per ATP hydrolyzed, thus driving DNA branch migration. The RuvB motors rotate together with the DNA substrate, which together with the progressing nucleotide cycle form the mechanistic basis for DNA recombination by continuous HJ branch migration. Branch migration allows RuvC to scan DNA until it finds its consensus sequence, where it cleaves and resolves cruciform DNA. This chain is Holliday junction branch migration complex subunit RuvB, found in Bifidobacterium adolescentis (strain ATCC 15703 / DSM 20083 / NCTC 11814 / E194a).